A 356-amino-acid chain; its full sequence is Protein RecA (356 aa).

Position 67–74 (67–74 (GPESSGKT)) interacts with ATP.

The protein belongs to the RecA family.

It localises to the cytoplasm. Functionally, can catalyze the hydrolysis of ATP in the presence of single-stranded DNA, the ATP-dependent uptake of single-stranded DNA by duplex DNA, and the ATP-dependent hybridization of homologous single-stranded DNAs. It interacts with LexA causing its activation and leading to its autocatalytic cleavage. This Yersinia pestis bv. Antiqua (strain Angola) protein is Protein RecA.